Reading from the N-terminus, the 442-residue chain is 26S proteasome non-ATPase regulatory subunit 12 homolog B (442 aa).

Positions 1-129 (MEESRQLESS…KEEQGLIAEA (129 aa)) form a coiled coil. The region spanning 232–403 (EICRSYKAIY…GIICFQIVKD (172 aa)) is the PCI domain.

This sequence belongs to the proteasome subunit p55 family. As to quaternary structure, component of the 19S regulatory particle (RP/PA700) lid subcomplex of the 26S proteasome. The 26S proteasome is composed of a core protease (CP), known as the 20S proteasome, capped at one or both ends by the 19S regulatory particle (RP/PA700). The RP/PA700 complex is composed of at least 17 different subunits in two subcomplexes, the base and the lid, which form the portions proximal and distal to the 20S proteolytic core, respectively. In terms of tissue distribution, ubiquitous with highest expression in flowers.

It localises to the cytoplasm. It is found in the nucleus. Acts as a regulatory subunit of the 26 proteasome which is involved in the ATP-dependent degradation of ubiquitinated proteins. Acts redundantly with RPN5A. In Arabidopsis thaliana (Mouse-ear cress), this protein is 26S proteasome non-ATPase regulatory subunit 12 homolog B (RPN5B).